A 118-amino-acid chain; its full sequence is Small ribosomal subunit protein uS13 (118 aa).

Residues 93–118 (RGLPVRGQRTKTNARTRKGPRKPIRK) form a disordered region.

The protein belongs to the universal ribosomal protein uS13 family. In terms of assembly, part of the 30S ribosomal subunit. Forms a loose heterodimer with protein S19. Forms two bridges to the 50S subunit in the 70S ribosome.

Functionally, located at the top of the head of the 30S subunit, it contacts several helices of the 16S rRNA. In the 70S ribosome it contacts the 23S rRNA (bridge B1a) and protein L5 of the 50S subunit (bridge B1b), connecting the 2 subunits; these bridges are implicated in subunit movement. Contacts the tRNAs in the A and P-sites. The sequence is that of Small ribosomal subunit protein uS13 from Azotobacter vinelandii (strain DJ / ATCC BAA-1303).